The primary structure comprises 783 residues: ATP-dependent zinc metalloprotease FtsH (783 aa).

A compositionally biased stretch (low complexity) spans 1–16 (MSETPNTNEQNNPNNQ). The disordered stretch occupies residues 1 to 79 (MSETPNTNEQ…DKEEDFASRL (79 aa)). At 1 to 86 (MSETPNTNEQ…SRLNTRPPQR (86 aa)) the chain is on the cytoplasmic side. The span at 35-61 (MPERPERHNQADGAPKRPGDDDRKSER) shows a compositional bias: basic and acidic residues. Residues 87–107 (ASIITIIIIFLVAFFIGSQMM) traverse the membrane as a helical segment. The Extracellular portion of the chain corresponds to 108–233 (NMVHGEETDD…EYQVTLPSNV (126 aa)). Residues 234 to 254 (TEILISVLPMLLFAGLLIYFF) form a helical membrane-spanning segment. The Cytoplasmic portion of the chain corresponds to 255–783 (SQMSKANNSQ…APQPPAAPQQ (529 aa)). Position 325–332 (325–332 (GPPGTGKT)) interacts with ATP. Position 547 (His-547) interacts with Zn(2+). Residue Glu-548 is part of the active site. Zn(2+) contacts are provided by His-551 and Asp-623. Over residues 738-771 (EAAAKAADQAEQPQVEAEPVAQVATPAAPVAPAV) the composition is skewed to low complexity. The segment at 738–783 (EAAAKAADQAEQPQVEAEPVAQVATPAAPVAPAVPEAPQPPAAPQQ) is disordered. Residues 772-783 (PEAPQPPAAPQQ) show a composition bias toward pro residues.

This sequence in the central section; belongs to the AAA ATPase family. The protein in the C-terminal section; belongs to the peptidase M41 family. Homohexamer. It depends on Zn(2+) as a cofactor.

The protein localises to the cell membrane. In terms of biological role, acts as a processive, ATP-dependent zinc metallopeptidase for both cytoplasmic and membrane proteins. Plays a role in the quality control of integral membrane proteins. The polypeptide is ATP-dependent zinc metalloprotease FtsH (Slackia heliotrinireducens (strain ATCC 29202 / DSM 20476 / NCTC 11029 / RHS 1) (Peptococcus heliotrinreducens)).